A 117-amino-acid chain; its full sequence is Ubiquitin-like protein 3 (117 aa).

One can recognise a Ubiquitin-like domain in the interval 10 to 88; that stretch reads INLRLILVSG…PFGKTTVMHL (79 aa). The S-palmitoyl cysteine moiety is linked to residue Cys-113. Cys-114 carries the cysteine methyl ester modification. Residue Cys-114 is the site of S-geranylgeranyl cysteine attachment. The propeptide at 115–117 is removed in mature form; that stretch reads VIL.

Its subcellular location is the cell membrane. The polypeptide is Ubiquitin-like protein 3 (Ubl3) (Mus musculus (Mouse)).